The chain runs to 155 residues: MATRALLAVIYASPNRCYISPSRIKIQSLTCSSSSHYYQRQSRKNHRIARSYSSDSDSSVLQPPDVARLAQTARISLTPAEIEECETKIRRVIDWFGQLQQVDVNSVEPAIRAEMDGGNLREDAPETFDNRDSIRASIPSFEDAYLKVPKILNKE.

The transit peptide at 1 to 52 directs the protein to the chloroplast and mitochondrion; the sequence is MATRALLAVIYASPNRCYISPSRIKIQSLTCSSSSHYYQRQSRKNHRIARSY.

The protein belongs to the GatC family. In terms of assembly, subunit of the heterotrimeric GatCAB amidotransferase (AdT) complex, composed of A, B and C subunits.

The protein resides in the mitochondrion. The protein localises to the plastid. It localises to the chloroplast. The enzyme catalyses L-glutamyl-tRNA(Gln) + L-glutamine + ATP + H2O = L-glutaminyl-tRNA(Gln) + L-glutamate + ADP + phosphate + H(+). In terms of biological role, allows the formation of correctly charged Gln-tRNA(Gln) through the transamidation of misacylated Glu-tRNA(Gln) in chloroplasts and mitochondria. The reaction takes place in the presence of glutamine and ATP through an activated gamma-phospho-Glu-tRNA(Gln). The polypeptide is Glutamyl-tRNA(Gln) amidotransferase subunit C, chloroplastic/mitochondrial (Arabidopsis thaliana (Mouse-ear cress)).